Here is a 398-residue protein sequence, read N- to C-terminus: Aldo-keto reductase ausK (398 aa).

NADP(+) is bound at residue D76. Y81 serves as the catalytic Proton donor. H156 provides a ligand contact to substrate. NADP(+)-binding positions include 186-187, Q212, 241-251, and 317-325; these read CN, DALGSGKFQSR, and RKIQHLHDN.

It belongs to the aldo/keto reductase family. Aldo/keto reductase 2 subfamily. In terms of assembly, homodimer.

Its pathway is secondary metabolite biosynthesis; terpenoid biosynthesis. Functionally, aldo-keto reductase; part of the gene cluster B that mediates the biosynthesis of austinol and dehydroaustinol, two fungal meroterpenoids. The first step of the pathway is the synthesis of 3,5-dimethylorsellinic acid by the polyketide synthase ausA. 3,5-dimethylorsellinic acid is then prenylated by the polyprenyl transferase ausN. Further epoxidation by the FAD-dependent monooxygenase ausM and cyclization by the probable terpene cyclase ausL lead to the formation of protoaustinoid A. Protoaustinoid A is then oxidized to spiro-lactone preaustinoid A3 by the combined action of the FAD-binding monooxygenases ausB and ausC, and the dioxygenase ausE. Acid-catalyzed keto-rearrangement and ring contraction of the tetraketide portion of preaustinoid A3 by ausJ lead to the formation of preaustinoid A4. The aldo-keto reductase ausK, with the help of ausH, is involved in the next step by transforming preaustinoid A4 into isoaustinone which is in turn hydroxylated by the P450 monooxygenase ausI to form austinolide. Finally, the cytochrome P450 monooxygenase ausG modifies austinolide to austinol. Austinol can be further modified to dehydroaustinol which forms a diffusible complex with diorcinol that initiates conidiation. Due to genetic rearrangements of the clusters and the subsequent loss of some enzymes, the end products of the Emericella nidulans austinoid biosynthesis clusters are austinol and dehydroaustinol, even if additional enzymes, such as the O-acetyltransferase ausQ and the cytochrome P450 monooxygenase ausR are still functional. The polypeptide is Aldo-keto reductase ausK (Emericella nidulans (strain FGSC A4 / ATCC 38163 / CBS 112.46 / NRRL 194 / M139) (Aspergillus nidulans)).